The following is a 62-amino-acid chain: Single-pass membrane and coiled-coil domain-containing protein 4 homolog (62 aa).

Residues Met1–His27 are disordered. Residues Ala9–Val31 are a coiled coil. A helical transmembrane segment spans residues Val30–Tyr50.

It belongs to the SMCO4 family.

Its subcellular location is the membrane. The sequence is that of Single-pass membrane and coiled-coil domain-containing protein 4 homolog from Nematostella vectensis (Starlet sea anemone).